The chain runs to 443 residues: Dihydroorotase (443 aa).

2 residues coordinate Zn(2+): His-80 and His-82. Substrate contacts are provided by residues 82–84 and Asn-114; that span reads HFR. Zn(2+)-binding residues include Asp-170, His-197, and His-251. Asn-297 contributes to the substrate binding site. Residue Asp-324 participates in Zn(2+) binding. Asp-324 is a catalytic residue. Substrate contacts are provided by residues His-328 and 342 to 343; that span reads FG.

This sequence belongs to the metallo-dependent hydrolases superfamily. DHOase family. Class I DHOase subfamily. Zn(2+) is required as a cofactor.

It catalyses the reaction (S)-dihydroorotate + H2O = N-carbamoyl-L-aspartate + H(+). It participates in pyrimidine metabolism; UMP biosynthesis via de novo pathway; (S)-dihydroorotate from bicarbonate: step 3/3. Its function is as follows. Catalyzes the reversible cyclization of carbamoyl aspartate to dihydroorotate. The polypeptide is Dihydroorotase (Wolbachia sp. subsp. Brugia malayi (strain TRS)).